Reading from the N-terminus, the 260-residue chain is MNILVLIKQVPDTNEVRIDPVTKTLIREGVPSIINPDDKNALEEAIRIREKVGGKVTVISMGPTQAEVALREALAMGADEAYLLTDRAFAGADTYATAKALSKAIEKFQYDIVFCGRQAIDGDTAQVGPQIAEQLDIPQVTYVRKVEIEGDKLIVERALEDGYEIIEVKTPVLLTAIKELNVPRYPSIKGIFNAYNKKEVKILTADDLEVDKNELGLKGSPTKVVATSTPNTERAGEIFTGNIKEAVQNLVERLNSRHVI.

It belongs to the ETF beta-subunit/FixA family. In terms of assembly, heterodimer of an alpha and a beta subunit. It depends on FAD as a cofactor. AMP is required as a cofactor.

Its function is as follows. The electron transfer flavoprotein serves as a specific electron acceptor for other dehydrogenases. It transfers the electrons to the main respiratory chain via ETF-ubiquinone oxidoreductase (ETF dehydrogenase). The sequence is that of Electron transfer flavoprotein subunit beta (etfB) from Thermoanaerobacterium thermosaccharolyticum (strain ATCC 7956 / DSM 571 / NCIMB 9385 / NCA 3814 / NCTC 13789 / WDCM 00135 / 2032) (Clostridium thermosaccharolyticum).